We begin with the raw amino-acid sequence, 136 residues long: Large ribosomal subunit protein uL16 (136 aa).

It belongs to the universal ribosomal protein uL16 family. Part of the 50S ribosomal subunit.

Its function is as follows. Binds 23S rRNA and is also seen to make contacts with the A and possibly P site tRNAs. The sequence is that of Large ribosomal subunit protein uL16 from Haemophilus ducreyi (strain 35000HP / ATCC 700724).